A 700-amino-acid polypeptide reads, in one-letter code: MSARRNFEWPELLTADGRGIAFGGDYNPDQWSEDIWDDDIRLMKQAGVNTVALAIFSWDRIQPTEDRWDFGWLDRIIDKLGNAGIVVDLASATATAPLWLYESHPEVLPRDKYGHPVNAGSRQSWSPTSPVFKEYALTLCRKLAERYGTNPYVTAWHMGNEYGWNNREDYSDNALEAFRAWCRRKYGTIDALNQAWGTTFWGQEMNGFDEVLIPRFMGADSMVNPGQKLDFERFGNDMLLDFYKAERDAIAEICPDKPFTTNFMVSTDQCCMDYAAWAKEVNFVSNDHYFHEGESHLDELACSDALMDSLALGKPWYVMEHSTSAVQWKPLNTRKRKGETVRDSLAHVAMGADAINFFQWRASAFGAEAFHSAMVPHAGEDTKLFRQVCELGASLHTLADAGVQGTELAHSDTAILFSAESEWATRSQTLPSMKLNHWHDVRDWYRAFLDAGSRADIVPLAYDWSSYKTVVLPTVLILSAADTQRLADFAAAGGRVVVGYATGLIDEHFHTWLGGYPGAGDGLLRSMLGVRGEEFNILGAEAEGEPGEIRLSSADDSAALDGTTTRLWQNDVNVTGEHAQVLATYAGEEADEWELDGTAAVTRNPYGSGEAYFVGCDLDVADLTKLVRAYLAASSQENADVLHTVRASADATFDFYLPRGKKTVELQGIEGEPVILFQTDREEKPGSYTVRRNGVLVVRR.

Positions 122 and 160 each coordinate substrate. Catalysis depends on Glu161, which acts as the Proton donor. Glu320 functions as the Nucleophile in the catalytic mechanism. Substrate-binding positions include Trp328 and Glu368–His371.

Belongs to the glycosyl hydrolase 42 family. Trimer. Tetramer. In terms of processing, the N-terminus is blocked.

The catalysed reaction is Hydrolysis of terminal non-reducing beta-D-galactose residues in beta-D-galactosides.. Its activity is regulated as follows. Inhibited by high substrate concentrations (100 mg/ml). No effect on activity with various EDTA concentrations (0-1 mM). 20-fold higher activity when cells grown on TOS than when cells grown on galactose, glucose and lactose. In terms of biological role, involved in the hydrolysis of transgalactooligosaccharides (TOS). Highly active towards Gal(beta1-4)Gal and Gal(beta1-4)-Gal-containing oligosaccharides. Low activity towards Gal(beta1-3)Gal, lactose and Gal(beta1-3)GalOMe. No activity towards Gal(beta1-6)Gal, Gal(beta1-4)Man, Gal(alpha1-4)Gal, Gal(alpha1-3)Gal(beta1-4)Gal, lactulose, 3'fucosyllactose, lacto-N-fucopentaose I, lacto-N-fucopentaose II, cellobiose, maltose or sucrose. No transglycosylation activity is found at high substrate concentrations (100 mg/ml) and only low transglycosylation activity at lower substrate concentrations (10 mg/ml). The polypeptide is Beta-galactosidase BgaB (bgaB) (Bifidobacterium adolescentis (strain ATCC 15703 / DSM 20083 / NCTC 11814 / E194a)).